Reading from the N-terminus, the 250-residue chain is Alpha/beta hydrolase nvfD (250 aa).

Active-site charge relay system residues include D198 and H226.

This sequence belongs to the AB hydrolase superfamily.

Its pathway is secondary metabolite biosynthesis; terpenoid biosynthesis. Alpha/beta hydrolase; part of the gene cluster that mediates the biosynthesis of novofumigatonin, a heavily oxygenated meroterpenoid containing a unique orthoester moiety. The first step of the pathway is the synthesis of 3,5-dimethylorsellinic acid (DMOA) by the polyketide synthase nvfA via condensation of one acetyl-CoA starter unit with 3 malonyl-CoA units and 2 methylations. DMOA is then converted to farnesyl-DMOA by the farnesyltransferase nvfB. Epoxydation by FAD-dependent monooxygenase nvfK, followed by a protonation-initiated cyclization catalyzed by the terpene cyclase nvfL leads to the production of asnavolin H. The short chain dehydrogenase nvfC then as a 3-OH dehydrogenase of asnovolin H to yield chemesin D. There are two branches to synthesize asnovolin A from chemesin D. In one branch, chemesin D undergoes Baeyer-Villiger oxidation by nvfH, methylation by nvfJ, and enoyl reduction by the nvfM D enoylreductase that reduces the double bond between C-5'and C-6', to form respectively asnovolin I, asnovolin K, and asnovolin A. In the other branch, the methylation precedes the Baeyer-Villiger oxidation and the enoyl reduction to yield asnovolin A via the asnovolin J intermediate. Asnovolin A is further converted to fumigatonoid A by the Fe(II)/2-oxoglutarate-dependent dioxygenase nvfI that catalyzes an endoperoxidation reaction. The alpha/beta hydrolase nvfD then acts as an epimerase that converts fumigatonoid A to its C-5' epimer, which then undergoes spontaneous or nvfD-catalyzed lactonization. The following step utilizes the ketoreductase nvfG to produce fumigatonoid B. The dioxygenase nvfE further converts fumigatonoid B into fumigatonoid C. Finally the Fe(II)/2-oxoglutarate-dependent dioxygenase nvfF catalyzes two rounds of oxidation to transform fumigatonoid C into the end product, novofumigatonin A. The sequence is that of Alpha/beta hydrolase nvfD from Aspergillus novofumigatus (strain IBT 16806).